A 446-amino-acid chain; its full sequence is Divalent metal cation transporter MntH (446 aa).

11 helical membrane passes run 32–52 (FSFL…GNWI), 59–79 (AQFG…AMLL), 107–127 (AFVF…AEVI), 139–159 (IPLL…LFIM), 168–188 (AIVG…VFIA), 210–230 (GALF…NLYL), 264–284 (SIAF…FFGV), 303–323 (PLLG…ALLA), 355–375 (LITR…FNSN), 381–401 (QLLV…LIPL), and 420–440 (VNII…YLII).

This sequence belongs to the NRAMP family.

The protein localises to the cell membrane. Its function is as follows. H(+)-stimulated, divalent metal cation uptake system. This chain is Divalent metal cation transporter MntH, found in Staphylococcus saprophyticus subsp. saprophyticus (strain ATCC 15305 / DSM 20229 / NCIMB 8711 / NCTC 7292 / S-41).